We begin with the raw amino-acid sequence, 188 residues long: dCTP deaminase (188 aa).

Residues 111–116 (KSTYAR), 135–137 (TLE), glutamine 156, tyrosine 170, and glutamine 180 contribute to the dCTP site. The Proton donor/acceptor role is filled by glutamate 137.

The protein belongs to the dCTP deaminase family. As to quaternary structure, homotrimer.

It carries out the reaction dCTP + H2O + H(+) = dUTP + NH4(+). Its pathway is pyrimidine metabolism; dUMP biosynthesis; dUMP from dCTP (dUTP route): step 1/2. In terms of biological role, catalyzes the deamination of dCTP to dUTP. This chain is dCTP deaminase, found in Pseudomonas putida (strain ATCC 700007 / DSM 6899 / JCM 31910 / BCRC 17059 / LMG 24140 / F1).